Here is a 408-residue protein sequence, read N- to C-terminus: PTI1-like tyrosine-protein kinase 3 (408 aa).

A compositionally biased stretch (basic and acidic residues) spans 59–76 (SSENEHLRSPKHHNDFGH). Positions 59 to 91 (SSENEHLRSPKHHNDFGHHTRKPQAAVKPDALK) are disordered. In terms of domain architecture, Protein kinase spans 113–395 (FGSKSLIGEG…IVVKALQPLL (283 aa)). Residues 119 to 127 (IGEGSYGRA) and Lys-141 contribute to the ATP site. Residue Asp-245 is the Proton acceptor of the active site.

Belongs to the protein kinase superfamily. Tyr protein kinase family. As to quaternary structure, interacts with OXI1. Phosphorylated by OXI1.

Its subcellular location is the cell membrane. It carries out the reaction L-tyrosyl-[protein] + ATP = O-phospho-L-tyrosyl-[protein] + ADP + H(+). This is PTI1-like tyrosine-protein kinase 3 (PTI13) from Arabidopsis thaliana (Mouse-ear cress).